The chain runs to 173 residues: ATP synthase subunit b (173 aa).

Residues 12-32 form a helical membrane-spanning segment; sequence LDVNPGLVVWTLVTFLVVVLV.

Belongs to the ATPase B chain family. F-type ATPases have 2 components, F(1) - the catalytic core - and F(0) - the membrane proton channel. F(1) has five subunits: alpha(3), beta(3), gamma(1), delta(1), epsilon(1). F(0) has three main subunits: a(1), b(2) and c(10-14). The alpha and beta chains form an alternating ring which encloses part of the gamma chain. F(1) is attached to F(0) by a central stalk formed by the gamma and epsilon chains, while a peripheral stalk is formed by the delta and b chains.

It is found in the cell inner membrane. F(1)F(0) ATP synthase produces ATP from ADP in the presence of a proton or sodium gradient. F-type ATPases consist of two structural domains, F(1) containing the extramembraneous catalytic core and F(0) containing the membrane proton channel, linked together by a central stalk and a peripheral stalk. During catalysis, ATP synthesis in the catalytic domain of F(1) is coupled via a rotary mechanism of the central stalk subunits to proton translocation. In terms of biological role, component of the F(0) channel, it forms part of the peripheral stalk, linking F(1) to F(0). The chain is ATP synthase subunit b from Leptospira interrogans serogroup Icterohaemorrhagiae serovar copenhageni (strain Fiocruz L1-130).